Consider the following 484-residue polypeptide: AMP nucleosidase (484 aa).

It belongs to the AMP nucleosidase family.

It carries out the reaction AMP + H2O = adenine + D-ribose 5-phosphate. Its function is as follows. Catalyzes the hydrolysis of the N-glycosidic bond of AMP to form adenine and ribose 5-phosphate. Involved in regulation of AMP concentrations. The protein is AMP nucleosidase of Escherichia coli O157:H7.